Consider the following 235-residue polypeptide: Glucosamine-6-phosphate deaminase (235 aa).

The Proton acceptor; for enolization step role is filled by D62. The active-site For ring-opening step is N128. H130 serves as the catalytic Proton acceptor; for ring-opening step. Residue E135 is the For ring-opening step of the active site.

The protein belongs to the glucosamine/galactosamine-6-phosphate isomerase family. NagB subfamily.

The catalysed reaction is alpha-D-glucosamine 6-phosphate + H2O = beta-D-fructose 6-phosphate + NH4(+). Its pathway is amino-sugar metabolism; N-acetylneuraminate degradation; D-fructose 6-phosphate from N-acetylneuraminate: step 5/5. Functionally, catalyzes the reversible isomerization-deamination of glucosamine 6-phosphate (GlcN6P) to form fructose 6-phosphate (Fru6P) and ammonium ion. This Lactococcus lactis subsp. cremoris (strain SK11) protein is Glucosamine-6-phosphate deaminase.